The primary structure comprises 361 residues: Phosphoserine aminotransferase (361 aa).

Arg42 contributes to the L-glutamate binding site. Pyridoxal 5'-phosphate-binding positions include 76-77 (AT), Trp102, Thr152, Asp172, and Gln195. Lys196 carries the N6-(pyridoxal phosphate)lysine modification. Residue 237–238 (NT) participates in pyridoxal 5'-phosphate binding.

The protein belongs to the class-V pyridoxal-phosphate-dependent aminotransferase family. SerC subfamily. As to quaternary structure, homodimer. It depends on pyridoxal 5'-phosphate as a cofactor.

The protein localises to the cytoplasm. The enzyme catalyses O-phospho-L-serine + 2-oxoglutarate = 3-phosphooxypyruvate + L-glutamate. It carries out the reaction 4-(phosphooxy)-L-threonine + 2-oxoglutarate = (R)-3-hydroxy-2-oxo-4-phosphooxybutanoate + L-glutamate. Its pathway is amino-acid biosynthesis; L-serine biosynthesis; L-serine from 3-phospho-D-glycerate: step 2/3. It functions in the pathway cofactor biosynthesis; pyridoxine 5'-phosphate biosynthesis; pyridoxine 5'-phosphate from D-erythrose 4-phosphate: step 3/5. In terms of biological role, catalyzes the reversible conversion of 3-phosphohydroxypyruvate to phosphoserine and of 3-hydroxy-2-oxo-4-phosphonooxybutanoate to phosphohydroxythreonine. The sequence is that of Phosphoserine aminotransferase from Xanthomonas axonopodis pv. citri (strain 306).